The sequence spans 177 residues: MDNAPKTFKVDRHKQLVPLNPGLETNFVCSFEIKSLDGKPFQTTIVEQGQIKPTQYREVDDGFISGQLEGDGTPRSYFLVLRAQEPCECTVKIVLSPKQQVQPHQQTHQQSQQTHNKTVANSGDPPPPPPSQPNKFLKPKWIVGMVIGVVVLYLLYRYRAQLMDKLNLGSKTPFSKN.

Positions 100–115 (QVQPHQQTHQQSQQTH) are enriched in low complexity. Residues 100 to 135 (QVQPHQQTHQQSQQTHNKTVANSGDPPPPPPSQPNK) are disordered. The helical transmembrane segment at 141–158 (WIVGMVIGVVVLYLLYRY) threads the bilayer.

Its subcellular location is the membrane. This is an uncharacterized protein from Aedes vexans (Inland floodwater mosquito).